The primary structure comprises 46 residues: YGNTGGYTPVPDIDDIHVVEIANYAVTEYNKKSGVVAGVNYRFVLK.

The Secondary area of contact motif lies at V35 to G38.

Belongs to the cystatin family. Phytocystatin subfamily.

Functionally, inhibitor of papain. The chain is Cystatin WCPI-3 from Wisteria floribunda (Japanese wisteria).